The chain runs to 129 residues: Fluoride-specific ion channel FluC (129 aa).

A run of 4 helical transmembrane segments spans residues 4 to 24, 30 to 50, 63 to 83, and 95 to 115; these read VLIV…LGEW, GFPT…GWLL, WSLL…TFSV, and IVAS…AYIG. Residues glycine 73 and threonine 76 each coordinate Na(+).

The protein belongs to the fluoride channel Fluc/FEX (TC 1.A.43) family.

Its subcellular location is the cell membrane. The enzyme catalyses fluoride(in) = fluoride(out). Its activity is regulated as follows. Na(+) is not transported, but it plays an essential structural role and its presence is essential for fluoride channel function. In terms of biological role, fluoride-specific ion channel. Important for reducing fluoride concentration in the cell, thus reducing its toxicity. The polypeptide is Fluoride-specific ion channel FluC (Oceanobacillus iheyensis (strain DSM 14371 / CIP 107618 / JCM 11309 / KCTC 3954 / HTE831)).